Reading from the N-terminus, the 224-residue chain is 7-cyano-7-deazaguanine synthase (224 aa).

8-18 contacts ATP; that stretch reads CSGGLDSTVAA. Zn(2+) is bound by residues Cys-190, Cys-198, Cys-201, and Cys-204.

It belongs to the QueC family. It depends on Zn(2+) as a cofactor.

It catalyses the reaction 7-carboxy-7-deazaguanine + NH4(+) + ATP = 7-cyano-7-deazaguanine + ADP + phosphate + H2O + H(+). The protein operates within purine metabolism; 7-cyano-7-deazaguanine biosynthesis. Catalyzes the ATP-dependent conversion of 7-carboxy-7-deazaguanine (CDG) to 7-cyano-7-deazaguanine (preQ(0)). The sequence is that of 7-cyano-7-deazaguanine synthase from Methanothrix thermoacetophila (strain DSM 6194 / JCM 14653 / NBRC 101360 / PT) (Methanosaeta thermophila).